The following is a 1313-amino-acid chain: Histone-lysine N-methyltransferase, H3 lysine-4 specific (1313 aa).

Disordered stretches follow at residues 1–205 (MSRS…DPSR), 400–458 (KKSR…KPRH), 555–607 (GKSS…AKNL), 667–792 (IVFD…AGED), 842–908 (ELPS…SKKQ), and 932–982 (AGIE…DPEL). Positions 7–18 (ASFAQFFPAAPR) are enriched in low complexity. A compositionally biased stretch (basic and acidic residues) spans 19–31 (AARDRATERERAR). Residues 70–80 (HITSLNHSSSA) show a composition bias toward polar residues. The segment covering 105–121 (SASSHTSTSSSIFSSST) has biased composition (low complexity). 2 stretches are compositionally biased toward polar residues: residues 130-158 (SVRNSHTHNSTTPLTTAGSPSSLYLSTSL) and 174-186 (NGLTPTLNGSATD). Over residues 194–204 (GTERVPPRDPS) the composition is skewed to basic and acidic residues. A compositionally biased stretch (basic and acidic residues) spans 559–607 (RSSEDHRRHSYGSEKRPPPEHRQRDDQDRRRRDEEADIEEEKKQRAKNL). Residues 702–716 (RVRKLKSRGVNARKH) show a composition bias toward basic residues. Basic and acidic residues predominate over residues 758–784 (MIRDTEEPESRPRSRVSSEEDRNKEET). Over residues 843-855 (LPSQEQAVESVTP) the composition is skewed to polar residues. The segment covering 868-884 (ADVKAEPAEDKETEDSR) has biased composition (basic and acidic residues). The segment covering 895–907 (PKKKAKAKKKSKK) has biased composition (basic residues). Basic and acidic residues predominate over residues 960-978 (LETKGEALEAPETESKPDL). The short motif at 1137–1142 (RVNNRR) is the RxxxRR motif element. One can recognise an SET domain in the interval 1171–1288 (KPVKFARSAI…QNEELTYDYK (118 aa)). Residue tyrosine 1287 participates in S-adenosyl-L-methionine binding. Residues 1297 to 1313 (DRIPCLCGTAACKGFLN) form the Post-SET domain.

This sequence belongs to the class V-like SAM-binding methyltransferase superfamily. As to quaternary structure, component of the Set1C/COMPASS complex.

It localises to the nucleus. Its subcellular location is the chromosome. The catalysed reaction is L-lysyl(4)-[histone H3] + 3 S-adenosyl-L-methionine = N(6),N(6),N(6)-trimethyl-L-lysyl(4)-[histone H3] + 3 S-adenosyl-L-homocysteine + 3 H(+). The enzyme catalyses N(6)-methyl-L-lysyl(4)-[histone H3] + S-adenosyl-L-methionine = N(6),N(6)-dimethyl-L-lysyl(4)-[histone H3] + S-adenosyl-L-homocysteine + H(+). It catalyses the reaction N(6),N(6)-dimethyl-L-lysyl(4)-[histone H3] + S-adenosyl-L-methionine = N(6),N(6),N(6)-trimethyl-L-lysyl(4)-[histone H3] + S-adenosyl-L-homocysteine + H(+). In terms of biological role, catalytic component of the COMPASS (Set1C) complex that specifically mono-, di- and trimethylates histone H3 to form H3K4me1/2/3. Binds RNAs which might negatively affect its histone methyltransferase activity. COMPASS recognizes ubiquitinated H2B on one face of the nucleosome which stimulates the methylation of H3 on the opposing face. This chain is Histone-lysine N-methyltransferase, H3 lysine-4 specific (set-1), found in Neurospora crassa (strain ATCC 24698 / 74-OR23-1A / CBS 708.71 / DSM 1257 / FGSC 987).